Consider the following 534-residue polypeptide: Envelope glycoprotein (534 aa).

Residues 1–34 (MEGPTHPKPSKDKTFSWDLMILVGVLLRLDVGMA) form the signal peptide. At 35 to 534 (NPSPHQIYNV…SLTSLSEVVL (500 aa)) the chain is on the extracellular side. Asn-43 and Asn-58 each carry an N-linked (GlcNAc...) asparagine; by host glycan. Disulfide bonds link Cys-115–Cys-132 and Cys-124–Cys-137. The disordered stretch occupies residues 245 to 279 (AMGPNLVLPDQKPPSRQSQIESRVTPHHSQGNGGT). Residues 258–274 (PSRQSQIESRVTPHHSQ) are compositionally biased toward polar residues. Asn-286, Asn-322, and Asn-327 each carry an N-linked (GlcNAc...) asparagine; by host glycan. Residues 332–335 (CWLC) carry the CXXC motif. 3 N-linked (GlcNAc...) asparagine; by host glycosylation sites follow: Asn-351, Asn-354, and Asn-430. Residues 468–488 (ISLTVALMLGGLTVGGIAAGV) form a fusion peptide region. Positions 496 to 534 (LETAQFRQLQMAMHTDIQALEESISALEKSLTSLSEVVL) form a coiled coil.

As to quaternary structure, the mature envelope protein (Env) consists of a trimer of SU-TM heterodimers attached by noncovalent interactions or by a labile interchain disulfide bond. In terms of processing, specific enzymatic cleavages in vivo yield mature proteins. Envelope glycoproteins are synthesized as an inactive precursor that is N-glycosylated and processed likely by host cell furin or by a furin-like protease in the Golgi to yield the mature SU and TM proteins. The cleavage site between SU and TM requires the minimal sequence [KR]-X-[KR]-R.

Its subcellular location is the virion membrane. It localises to the host cell membrane. In terms of biological role, the surface protein (SU) attaches the virus to the host cell by binding to its receptor. This interaction triggers the refolding of the transmembrane protein (TM) and is thought to activate its fusogenic potential by unmasking its fusion peptide. Fusion occurs at the host cell plasma membrane. The transmembrane protein (TM) acts as a class I viral fusion protein. Under the current model, the protein has at least 3 conformational states: pre-fusion native state, pre-hairpin intermediate state, and post-fusion hairpin state. During viral and target cell membrane fusion, the coiled coil regions (heptad repeats) assume a trimer-of-hairpins structure, positioning the fusion peptide in close proximity to the C-terminal region of the ectodomain. The formation of this structure appears to drive apposition and subsequent fusion of viral and target cell membranes. Membranes fusion leads to delivery of the nucleocapsid into the cytoplasm. This is Envelope glycoprotein (env) from Feline sarcoma virus (strain Snyder-Theilen).